An 89-amino-acid chain; its full sequence is Small ribosomal subunit protein uS15 (89 aa).

This sequence belongs to the universal ribosomal protein uS15 family. In terms of assembly, part of the 30S ribosomal subunit. Forms a bridge to the 50S subunit in the 70S ribosome, contacting the 23S rRNA.

One of the primary rRNA binding proteins, it binds directly to 16S rRNA where it helps nucleate assembly of the platform of the 30S subunit by binding and bridging several RNA helices of the 16S rRNA. Functionally, forms an intersubunit bridge (bridge B4) with the 23S rRNA of the 50S subunit in the ribosome. In Chlorobium limicola (strain DSM 245 / NBRC 103803 / 6330), this protein is Small ribosomal subunit protein uS15.